The primary structure comprises 347 residues: uncharacterized protein (347 aa).

A run of 10 helical transmembrane segments spans residues 6–26 (GSAS…GFAT), 37–57 (FGWF…LLGA), 90–110 (FMLF…GALF), 114–134 (LGMS…IVMT), 140–160 (IFGV…IVVA), 182–202 (WLLS…AVLV), 217–237 (GALI…LSLS), 262–282 (LIYL…NLYG), 289–309 (SFLP…AYIT), and 317–337 (LIST…GALL).

The protein resides in the cell membrane. This is an uncharacterized protein from Bacillus subtilis (strain 168).